Consider the following 126-residue polypeptide: Glycine cleavage system H protein (126 aa).

The Lipoyl-binding domain occupies 22-104; that stretch reads VVFIGITDYA…YGAGWIIKVK (83 aa). Lysine 63 carries the post-translational modification N6-lipoyllysine.

The protein belongs to the GcvH family. As to quaternary structure, the glycine cleavage system is composed of four proteins: P, T, L and H. It depends on (R)-lipoate as a cofactor.

In terms of biological role, the glycine cleavage system catalyzes the degradation of glycine. The H protein shuttles the methylamine group of glycine from the P protein to the T protein. In Porphyromonas gingivalis (strain ATCC 33277 / DSM 20709 / CIP 103683 / JCM 12257 / NCTC 11834 / 2561), this protein is Glycine cleavage system H protein.